The following is a 291-amino-acid chain: MGSAEQACGCKGARFCALCETTERVKKLRVVEDKHVNYKVFIYDHIRQIAIPTTNLNSQSSLEDIIDESTSCQSVSTDGSIEIDGLTLIHNFLSESEESKILNMIDTVEWAQSQSGRRKQDYGPKVNFKHKKVKTDTFVGMPEYADMLLNKMSEYDVKKLGNYQPFEMCNLEYEEVKKSAIEMHQDDMWIWGNRLISINLINGSVMTLSNDNKSFLCYVHMPHRSLLCMADECRYDWKHGVLAHHIRGRRIALTMREAAKDFAEGGELYEKYGAELIRLGNIRVPLSKTSV.

One can recognise a Fe2OG dioxygenase domain in the interval 85–256 (GLTLIHNFLS…RGRRIALTMR (172 aa)). Residue 171-173 (LEY) coordinates 2-oxoglutarate. Positions 184, 186, and 239 each coordinate Fe cation.

It belongs to the alkB family. As to quaternary structure, interacts with top-2; the interaction is required for localization of top-2 to DNA. Also interacts with mtss-1, his-24, ule-3, C18B2.3, pgl-1, ceh-93, mcm-4 and F37C4.5. The cofactor is Fe(2+).

It is found in the nucleus. The enzyme catalyses an N(6)-methyl-2'-deoxyadenosine in DNA + 2-oxoglutarate + O2 = a 2'-deoxyadenosine in DNA + formaldehyde + succinate + CO2. Dioxygenase that specifically demethylates DNA methylated on the 6th position of adenine (N(6)-methyladenosine) DNA. N(6)-methyladenosine (m6A) DNA is involved in epigenetic transgenerational inheritance. Plays an essential role in DNA replication and repair in the germline during meiosis. Binds to components of the DNA replication machinery such as top-2, and directs their localization to DNA to control DNA replication. In Caenorhabditis elegans, this protein is DNA N6-methyl adenine demethylase.